Here is a 260-residue protein sequence, read N- to C-terminus: Activator of 90 kDa heat shock protein ATPase homolog 2 (260 aa).

It belongs to the AHA1 family.

Its function is as follows. Co-chaperone that stimulates HSP90 ATPase activity. This is Activator of 90 kDa heat shock protein ATPase homolog 2 (AHSA2) from Bos taurus (Bovine).